The sequence spans 213 residues: Putative amidate substrates transporter protein (213 aa).

6 helical membrane passes run 4–20, 32–48, 56–72, 116–132, 146–162, and 172–188; these read VGLF…GLML, LNFF…TVLI, AVIF…FTYL, VIWL…FLLL, VAVA…AFLI, and LPAA…VVLA.

This sequence belongs to the AmiS/UreI family.

Its subcellular location is the cell membrane. Its function is as follows. Possible transporter that might be responsible for the adsorption of amidase substrates or release of their hydrolysis products. The polypeptide is Putative amidate substrates transporter protein (Mycolicibacterium smegmatis (Mycobacterium smegmatis)).